A 128-amino-acid chain; its full sequence is Kinetoplast-associated protein 4 (128 aa).

The propeptide occupies 1–10 (MLRFVPRRLA). Positions 60–87 (AHPGFKRKEKEPKELKAAKAAKTSTPRA) are disordered. Residues 65–76 (KRKEKEPKELKA) show a composition bias toward basic and acidic residues.

This sequence belongs to the KAP family. As to quaternary structure, associates with the kinetoplast DNA network.

The protein localises to the mitochondrion matrix. Its subcellular location is the kinetoplast. In terms of biological role, histone H1-like DNA-binding protein involved in the organization and segregation of kinetoplast DNA (kDNA). The mitochondrial DNA of kinetoplastid protozoa consists of about 5,000 minicircles and 20 to 30 maxicircles. These circular DNAs are held together by catenation into a highly organized compact disk structure referred to as a kinetoplast DNA (kDNA) network. Binds preferentially to a specific fragment of minicircle DNA and is able to compact kDNA networks through DNA charge neutralization and condensation. The protein is Kinetoplast-associated protein 4 (KAP4) of Crithidia fasciculata.